Here is a 1081-residue protein sequence, read N- to C-terminus: Probable sucrose-phosphate synthase 2 (1081 aa).

3 disordered regions span residues 116-152, 239-267, and 760-780; these read EQGR…PRGN, EPTE…EDLG, and IKRQ…GDVP. Residues 256–267 are compositionally biased toward acidic residues; sequence EPEEEEEEEDLG.

This sequence belongs to the glycosyltransferase 1 family. In terms of assembly, homodimer or homotetramer.

The catalysed reaction is beta-D-fructose 6-phosphate + UDP-alpha-D-glucose = sucrose 6(F)-phosphate + UDP + H(+). Its pathway is glycan biosynthesis; sucrose biosynthesis; sucrose from D-fructose 6-phosphate and UDP-alpha-D-glucose: step 1/2. Its activity is regulated as follows. Activity is regulated by phosphorylation and moderated by concentration of metabolites and light. Functionally, plays a role in photosynthetic sucrose synthesis by catalyzing the rate-limiting step of sucrose biosynthesis from UDP-glucose and fructose- 6-phosphate. Involved in the regulation of carbon partitioning in the leaves of plants. May regulate the synthesis of sucrose and therefore play a major role as a limiting factor in the export of photoassimilates out of the leaf. Plays a role for sucrose availability that is essential for plant growth and fiber elongation. The polypeptide is Probable sucrose-phosphate synthase 2 (SPS2) (Craterostigma plantagineum (Blue gem)).